The chain runs to 388 residues: MKDCEYQQISPGAAPLPASPGARRPGPAASPTPGPGPAPPAAPAPPRWSSSGSGSGSGSGSLGRRPRRKWEVFPGRNRFYCGGRLMLAGHGGVFALTLLLILTTTGLFFVFDCPYLARKLTLAIPIIAAILFFFVMSCLLQTSFTDPGILPRATVCEAAALEKQIDNTGSSTYRPPPRTREVLINGQMVKLKYCFTCKMFRPPRTSHCSVCDNCVERFDHHCPWVGNCVGRRNYRFFYAFILSLSFLTAFIFACVVTHLTLRAQGSNFLSTLKETPASVLELVICFFSIWSILGLSGFHTYLVASNLTTNEDIKGSWSSKRGGEASVNPYSHKSIITNCCAVLCGPLPPSLIDRRGFVQSDTVLPSPIRSDEPACRAKPDASMVGGHP.

A disordered region spans residues 1–67 (MKDCEYQQIS…GSGSLGRRPR (67 aa)). The Cytoplasmic portion of the chain corresponds to 1–90 (MKDCEYQQIS…CGGRLMLAGH (90 aa)). Residues 10-27 (SPGAAPLPASPGARRPGP) show a composition bias toward low complexity. The residue at position 19 (Ser19) is a Phosphoserine. Pro residues predominate over residues 28 to 46 (AASPTPGPGPAPPAAPAPP). Residues 91-111 (GGVFALTLLLILTTTGLFFVF) form a helical membrane-spanning segment. The Lumenal portion of the chain corresponds to 112–119 (DCPYLARK). A helical membrane pass occupies residues 120–140 (LTLAIPIIAAILFFFVMSCLL). The Cytoplasmic segment spans residues 141–235 (QTSFTDPGIL…GNCVGRRNYR (95 aa)). The 51-residue stretch at 192 to 242 (KYCFTCKMFRPPRTSHCSVCDNCVERFDHHCPWVGNCVGRRNYRFFYAFIL) folds into the DHHC domain. Residue Cys222 is the S-palmitoyl cysteine intermediate of the active site. A helical membrane pass occupies residues 236 to 256 (FFYAFILSLSFLTAFIFACVV). Residues 257–277 (THLTLRAQGSNFLSTLKETPA) are Lumenal-facing. Residues 278-298 (SVLELVICFFSIWSILGLSGF) form a helical membrane-spanning segment. The Cytoplasmic portion of the chain corresponds to 299 to 388 (HTYLVASNLT…PDASMVGGHP (90 aa)). A disordered region spans residues 364–388 (LPSPIRSDEPACRAKPDASMVGGHP). The segment covering 369–379 (RSDEPACRAKP) has biased composition (basic and acidic residues).

This sequence belongs to the DHHC palmitoyltransferase family. ERF2/ZDHHC9 subfamily. In terms of tissue distribution, widely expressed.

Its subcellular location is the golgi apparatus membrane. The catalysed reaction is L-cysteinyl-[protein] + hexadecanoyl-CoA = S-hexadecanoyl-L-cysteinyl-[protein] + CoA. In terms of biological role, palmitoyltransferase that catalyzes the addition of palmitate onto various protein substrates, such as CGAS, HRAS and LCK. Acts as a negative regulator of the cGAS-STING pathway be mediating palmitoylation and inactivation of CGAS. May also have a palmitoyltransferase activity toward the beta-2 adrenergic receptor/ADRB2 and therefore regulate G protein-coupled receptor signaling. This chain is Palmitoyltransferase ZDHHC18, found in Homo sapiens (Human).